We begin with the raw amino-acid sequence, 68 residues long: UPF0435 protein Sca_1453 (68 aa).

Belongs to the UPF0435 family.

The protein is UPF0435 protein Sca_1453 of Staphylococcus carnosus (strain TM300).